The chain runs to 99 residues: Nucleoid-associated protein SEQ_0368 (99 aa).

The protein belongs to the YbaB/EbfC family. As to quaternary structure, homodimer.

The protein resides in the cytoplasm. It localises to the nucleoid. Functionally, binds to DNA and alters its conformation. May be involved in regulation of gene expression, nucleoid organization and DNA protection. The protein is Nucleoid-associated protein SEQ_0368 of Streptococcus equi subsp. equi (strain 4047).